The chain runs to 126 residues: Protein translocase subunit SecE (126 aa).

Helical transmembrane passes span 20-40 (WLAA…YGEM), 42-62 (VVVR…VAAT), and 97-117 (IVLA…GIMV).

Belongs to the SecE/SEC61-gamma family. As to quaternary structure, component of the Sec protein translocase complex. Heterotrimer consisting of SecY, SecE and SecG subunits. The heterotrimers can form oligomers, although 1 heterotrimer is thought to be able to translocate proteins. Interacts with the ribosome. Interacts with SecDF, and other proteins may be involved. Interacts with SecA.

Its subcellular location is the cell inner membrane. In terms of biological role, essential subunit of the Sec protein translocation channel SecYEG. Clamps together the 2 halves of SecY. May contact the channel plug during translocation. This Vibrio alginolyticus protein is Protein translocase subunit SecE.